A 271-amino-acid polypeptide reads, in one-letter code: Dirigent protein 17 (271 aa).

The span at 1 to 12 shows a compositional bias: polar residues; sequence MEDTGSIKQEAQ. Residues 1 to 22 form a disordered region; the sequence is MEDTGSIKQEAQSHPPGIFEIP. A glycan (N-linked (GlcNAc...) asparagine) is linked at Asn-255.

It belongs to the plant dirigent protein family. As to quaternary structure, homodimer.

It is found in the secreted. It localises to the extracellular space. Its subcellular location is the apoplast. Dirigent proteins impart stereoselectivity on the phenoxy radical-coupling reaction, yielding optically active lignans from two molecules of coniferyl alcohol in the biosynthesis of lignans, flavonolignans, and alkaloids and thus plays a central role in plant secondary metabolism. This chain is Dirigent protein 17 (DIR17), found in Arabidopsis thaliana (Mouse-ear cress).